We begin with the raw amino-acid sequence, 432 residues long: MHIAVVGLSHRTAPVEIRERLSIPEQTMETSLQSLRGHEQVLEASILSTCNRLEIYTLVRHPDLGVSAVSEFLSGHSGLATGELTPHLFNYHHEDAVDHLMRVAAGLDSLVLGEGQILSQVKKMMRLGQEHKSLGPILNRLLTQAVSTGKRVRSETNLGTGAVSISSAAVELAQLKLGQSRGLDQLVTLESEQIAVVGAGRMSRLLLQHLQAKGASGVVLLNRTVQRAELLAADFPDLPVQCRPLTDLDQCLSTCSLVFTSTAADDPIIDAARLEPLNRRSKLRLIDIGVPRNIAADAAAVDGVESHDVDDLQEVVARNQEARQAMAREAEQLLQQEAQQFLEWWDSLEAVPTINRLRSSMETIRVEELQKALSRMGPDFSARERKVVEALSKGIINKILHTPVTSLRAPQGRQERQQALRTVERLFSLGDD.

Substrate is bound by residues 49–52 (TCNR), Ser-109, 114–116 (EGQ), and Gln-120. Cys-50 functions as the Nucleophile in the catalytic mechanism. 198–203 (GAGRMS) serves as a coordination point for NADP(+).

It belongs to the glutamyl-tRNA reductase family. As to quaternary structure, homodimer.

It catalyses the reaction (S)-4-amino-5-oxopentanoate + tRNA(Glu) + NADP(+) = L-glutamyl-tRNA(Glu) + NADPH + H(+). It functions in the pathway porphyrin-containing compound metabolism; protoporphyrin-IX biosynthesis; 5-aminolevulinate from L-glutamyl-tRNA(Glu): step 1/2. Its pathway is porphyrin-containing compound metabolism; chlorophyll biosynthesis. Its function is as follows. Catalyzes the NADPH-dependent reduction of glutamyl-tRNA(Glu) to glutamate 1-semialdehyde (GSA). The sequence is that of Glutamyl-tRNA reductase from Parasynechococcus marenigrum (strain WH8102).